Here is a 259-residue protein sequence, read N- to C-terminus: Deoxyribose-phosphate aldolase (259 aa).

The Proton donor/acceptor role is filled by Asp-102. The Schiff-base intermediate with acetaldehyde role is filled by Lys-166. The Proton donor/acceptor role is filled by Lys-200.

It belongs to the DeoC/FbaB aldolase family. DeoC type 2 subfamily.

It localises to the cytoplasm. The enzyme catalyses 2-deoxy-D-ribose 5-phosphate = D-glyceraldehyde 3-phosphate + acetaldehyde. Its pathway is carbohydrate degradation; 2-deoxy-D-ribose 1-phosphate degradation; D-glyceraldehyde 3-phosphate and acetaldehyde from 2-deoxy-alpha-D-ribose 1-phosphate: step 2/2. In terms of biological role, catalyzes a reversible aldol reaction between acetaldehyde and D-glyceraldehyde 3-phosphate to generate 2-deoxy-D-ribose 5-phosphate. The chain is Deoxyribose-phosphate aldolase from Vibrio cholerae serotype O1 (strain ATCC 39315 / El Tor Inaba N16961).